A 224-amino-acid chain; its full sequence is Non-structural protein 3 (224 aa).

The CoV 3a-like viroporin TM domain maps to 34–124 (NVVPIRQASN…RYKNALFIIF (91 aa)). 3 helical membrane-spanning segments follow: residues 40–60 (QASNVTGFLFTSVFVYFFALF), 69–88 (YIMLAARFAVVFLYCPLLYY), and 95–111 (ATIICCALIGRLCLVCF). Residues 128 to 203 (TLSFLNGKAA…KLYVFSQHQI (76 aa)) form the CoV 3a-like viroporin CD domain.

The protein localises to the host membrane. The sequence is that of Non-structural protein 3 from Sus scrofa (Pig).